The following is a 250-amino-acid chain: MVDKLLNATLNVVKNRGEQLFIDVARPYAYTLVAKFDRDKYIMRVATDAEQVSQSAIKDLKLLSIHTNAPSICVVSSVKGHLLQRGVVYLRDDVVFMSLATLTDVLEGKKPIFKLNRGVITASIDGEKLRAKRQQAGLSLGTLATNLGVTRETVYRYERGEIEAPLKIAEKLINMFGEDITKKIKINETPKVSQEELASRQIGAKTYRLLESHPDAIKWEDRTILISSNAERYQKTVELANALGAEVERA.

The HTH cro/C1-type domain maps to 129–183; that stretch reads LRAKRQQAGLSLGTLATNLGVTRETVYRYERGEIEAPLKIAEKLINMFGEDITKK. Residues 140–159 constitute a DNA-binding region (H-T-H motif); sequence LGTLATNLGVTRETVYRYER.

In Pyrobaculum aerophilum (strain ATCC 51768 / DSM 7523 / JCM 9630 / CIP 104966 / NBRC 100827 / IM2), this protein is Putative HTH-type transcriptional regulatory protein PAE1627.